The primary structure comprises 356 residues: Dynein axonemal heavy chain 12 (356 aa).

6 ANK repeats span residues 17–46 (DSSS…DANV), 50–81 (SGHL…AIKR), 82–111 (SGIS…DVNF), 124–153 (HRKS…MPNQ), 154–183 (DPVN…NVNY), and 185–218 (CRVN…DTEL). The SOCS box domain maps to 290–345 (WSEIHFILTNPRSLKHLCRLKIRKCMGRLRLRCPVFMSFLPLPSRLKAYVLYKEYD).

The protein belongs to the dynein heavy chain family. Consists of at least two heavy chains and a number of intermediate and light chains.

The protein resides in the cytoplasm. The protein localises to the cytoskeleton. It localises to the cilium axoneme. Its pathway is protein modification; protein ubiquitination. Force generating protein of respiratory cilia. Produces force towards the minus ends of microtubules. Dynein has ATPase activity; the force-producing power stroke is thought to occur on release of ADP. Involved in sperm motility; implicated in sperm flagellar assembly. In terms of biological role, may be a substrate-recognition component of a SCF-like ECS (Elongin-Cullin-SOCS-box protein) E3 ubiquitin-protein ligase complex which mediates the ubiquitination and subsequent proteasomal degradation of target proteins. The polypeptide is Dynein axonemal heavy chain 12 (DNAH12) (Bos taurus (Bovine)).